The chain runs to 455 residues: tRNA modification GTPase MnmE (455 aa).

Residues Arg-23, Glu-85, and Arg-124 each contribute to the (6S)-5-formyl-5,6,7,8-tetrahydrofolate site. One can recognise a TrmE-type G domain in the interval 220–375; that stretch reads GVSVVIAGKP…LQDAIFEAFI (156 aa). Asn-230 serves as a coordination point for K(+). GTP contacts are provided by residues 230-235, 249-255, and 274-277; these read NVGKSS, TSVPGTT, and DTAG. Position 234 (Ser-234) interacts with Mg(2+). Thr-249, Val-251, and Thr-254 together coordinate K(+). Residue Thr-255 coordinates Mg(2+). Lys-455 contributes to the (6S)-5-formyl-5,6,7,8-tetrahydrofolate binding site.

The protein belongs to the TRAFAC class TrmE-Era-EngA-EngB-Septin-like GTPase superfamily. TrmE GTPase family. In terms of assembly, homodimer. Heterotetramer of two MnmE and two MnmG subunits. K(+) is required as a cofactor.

It is found in the cytoplasm. Its function is as follows. Exhibits a very high intrinsic GTPase hydrolysis rate. Involved in the addition of a carboxymethylaminomethyl (cmnm) group at the wobble position (U34) of certain tRNAs, forming tRNA-cmnm(5)s(2)U34. The sequence is that of tRNA modification GTPase MnmE from Geotalea uraniireducens (strain Rf4) (Geobacter uraniireducens).